Here is a 334-residue protein sequence, read N- to C-terminus: GTP 3',8-cyclase (334 aa).

Residues 13–239 enclose the Radical SAM core domain; that stretch reads RFHRKFYYLR…KVKAVNDGPA (227 aa). A GTP-binding site is contributed by R22. [4Fe-4S] cluster-binding residues include C29 and C33. Y35 contributes to the S-adenosyl-L-methionine binding site. Residue C36 participates in [4Fe-4S] cluster binding. A GTP-binding site is contributed by R73. G77 is a binding site for S-adenosyl-L-methionine. T104 serves as a coordination point for GTP. Residue S128 participates in S-adenosyl-L-methionine binding. GTP is bound at residue K165. M199 provides a ligand contact to S-adenosyl-L-methionine. Positions 262 and 265 each coordinate [4Fe-4S] cluster. Residue 267 to 269 participates in GTP binding; the sequence is RLR. C279 lines the [4Fe-4S] cluster pocket.

Belongs to the radical SAM superfamily. MoaA family. As to quaternary structure, monomer and homodimer. It depends on [4Fe-4S] cluster as a cofactor.

It catalyses the reaction GTP + AH2 + S-adenosyl-L-methionine = (8S)-3',8-cyclo-7,8-dihydroguanosine 5'-triphosphate + 5'-deoxyadenosine + L-methionine + A + H(+). It functions in the pathway cofactor biosynthesis; molybdopterin biosynthesis. In terms of biological role, catalyzes the cyclization of GTP to (8S)-3',8-cyclo-7,8-dihydroguanosine 5'-triphosphate. This is GTP 3',8-cyclase from Vibrio atlanticus (strain LGP32) (Vibrio splendidus (strain Mel32)).